We begin with the raw amino-acid sequence, 182 residues long: UPF0301 protein NMB1336 (182 aa).

The protein belongs to the UPF0301 (AlgH) family.

This is UPF0301 protein NMB1336 from Neisseria meningitidis serogroup B (strain ATCC BAA-335 / MC58).